Here is a 182-residue protein sequence, read N- to C-terminus: Hypoxanthine/guanine phosphoribosyltransferase (182 aa).

The protein belongs to the purine/pyrimidine phosphoribosyltransferase family. Archaeal HPRT subfamily. As to quaternary structure, homodimer.

Its subcellular location is the cytoplasm. The catalysed reaction is IMP + diphosphate = hypoxanthine + 5-phospho-alpha-D-ribose 1-diphosphate. The enzyme catalyses GMP + diphosphate = guanine + 5-phospho-alpha-D-ribose 1-diphosphate. It participates in purine metabolism; IMP biosynthesis via salvage pathway; IMP from hypoxanthine: step 1/1. Catalyzes a salvage reaction resulting in the formation of IMP that is energically less costly than de novo synthesis. This Methanospirillum hungatei JF-1 (strain ATCC 27890 / DSM 864 / NBRC 100397 / JF-1) protein is Hypoxanthine/guanine phosphoribosyltransferase.